Reading from the N-terminus, the 114-residue chain is Ribonuclease P protein component (114 aa).

This sequence belongs to the RnpA family. In terms of assembly, consists of a catalytic RNA component (M1 or rnpB) and a protein subunit.

The enzyme catalyses Endonucleolytic cleavage of RNA, removing 5'-extranucleotides from tRNA precursor.. Its function is as follows. RNaseP catalyzes the removal of the 5'-leader sequence from pre-tRNA to produce the mature 5'-terminus. It can also cleave other RNA substrates such as 4.5S RNA. The protein component plays an auxiliary but essential role in vivo by binding to the 5'-leader sequence and broadening the substrate specificity of the ribozyme. The sequence is that of Ribonuclease P protein component from Legionella pneumophila (strain Paris).